The primary structure comprises 490 residues: GTPase Der (490 aa).

2 consecutive EngA-type G domains span residues Pro3–Val166 and Ile203–Thr376. Residues Gly9–Ser16, Asp56–Ile60, Asn118–Asp121, Gly209–Ser216, Asp256–Val260, and Asn321–Asp324 each bind GTP. The KH-like domain occupies Arg377–Glu461.

This sequence belongs to the TRAFAC class TrmE-Era-EngA-EngB-Septin-like GTPase superfamily. EngA (Der) GTPase family. Associates with the 50S ribosomal subunit.

Functionally, GTPase that plays an essential role in the late steps of ribosome biogenesis. The chain is GTPase Der from Citrobacter koseri (strain ATCC BAA-895 / CDC 4225-83 / SGSC4696).